Here is a 95-residue protein sequence, read N- to C-terminus: Aspartyl/glutamyl-tRNA(Asn/Gln) amidotransferase subunit C (95 aa).

The protein belongs to the GatC family. As to quaternary structure, heterotrimer of A, B and C subunits.

The enzyme catalyses L-glutamyl-tRNA(Gln) + L-glutamine + ATP + H2O = L-glutaminyl-tRNA(Gln) + L-glutamate + ADP + phosphate + H(+). It carries out the reaction L-aspartyl-tRNA(Asn) + L-glutamine + ATP + H2O = L-asparaginyl-tRNA(Asn) + L-glutamate + ADP + phosphate + 2 H(+). In terms of biological role, allows the formation of correctly charged Asn-tRNA(Asn) or Gln-tRNA(Gln) through the transamidation of misacylated Asp-tRNA(Asn) or Glu-tRNA(Gln) in organisms which lack either or both of asparaginyl-tRNA or glutaminyl-tRNA synthetases. The reaction takes place in the presence of glutamine and ATP through an activated phospho-Asp-tRNA(Asn) or phospho-Glu-tRNA(Gln). This chain is Aspartyl/glutamyl-tRNA(Asn/Gln) amidotransferase subunit C, found in Methylobacterium nodulans (strain LMG 21967 / CNCM I-2342 / ORS 2060).